We begin with the raw amino-acid sequence, 148 residues long: Phosphopantetheine adenylyltransferase (148 aa).

It belongs to the eukaryotic CoaD family.

The protein localises to the cytoplasm. It carries out the reaction (R)-4'-phosphopantetheine + ATP + H(+) = 3'-dephospho-CoA + diphosphate. It participates in cofactor biosynthesis; coenzyme A biosynthesis. Reversibly transfers an adenylyl group from ATP to 4'-phosphopantetheine, yielding dephospho-CoA (dPCoA) and pyrophosphate. This Archaeoglobus fulgidus (strain ATCC 49558 / DSM 4304 / JCM 9628 / NBRC 100126 / VC-16) protein is Phosphopantetheine adenylyltransferase.